A 310-amino-acid chain; its full sequence is Putative S-adenosyl-L-methionine-dependent methyltransferase MMAR_3534 (310 aa).

S-adenosyl-L-methionine contacts are provided by residues aspartate 131 and 160 to 161 (DL).

It belongs to the UPF0677 family.

Exhibits S-adenosyl-L-methionine-dependent methyltransferase activity. This chain is Putative S-adenosyl-L-methionine-dependent methyltransferase MMAR_3534, found in Mycobacterium marinum (strain ATCC BAA-535 / M).